Consider the following 464-residue polypeptide: Glycine receptor subunit alpha-3 (464 aa).

The first 33 residues, 1-33 (MAHVRHFRTLLSGFYFWEAALLLSLVATKETNS), serve as a signal peptide directing secretion. Topologically, residues 34-255 (ARSRSAPMSP…RFHLERQMGY (222 aa)) are extracellular. Asn-71 is a glycosylation site (N-linked (GlcNAc...) asparagine). Cysteines 171 and 185 form a disulfide. Positions 225 and 227 each coordinate Zn(2+). Cys-231 and Cys-242 are disulfide-bonded. Residue 235-240 (YNTGKF) participates in strychnine binding. Zn(2+) is bound at residue His-248. The chain crosses the membrane as a helical span at residues 256 to 277 (YLIQMYIPSLLIVILSWVSFWI). The Cytoplasmic segment spans residues 278-282 (NMDAA). The chain crosses the membrane as a helical span at residues 283–303 (PARVALGITTVLTMTTQSSGS). The Extracellular portion of the chain corresponds to 304 to 314 (RASLPKVSYVK). Residues 315–335 (AIDIWMAVCLLFVFSALLEYA) form a helical membrane-spanning segment. Over 336 to 430 (AVNFVSRQHK…FIDRAKKIDT (95 aa)) the chain is Cytoplasmic. A Phosphoserine modification is found at Ser-370. Phosphoserine; by PKA is present on Ser-379. Residues 431–451 (ISRACFPLAFLIFNIFYWVIY) form a helical membrane-spanning segment. Topologically, residues 452 to 464 (KILRHEDIHHQQD) are extracellular.

It belongs to the ligand-gated ion channel (TC 1.A.9) family. Glycine receptor (TC 1.A.9.3) subfamily. GLRA3 sub-subfamily. As to quaternary structure, homopentamer (in vitro). Heteropentamer composed of GLRA3 and GLRB. Both homopentamers and heteropentamers form functional ion channels, but their characteristics are subtly different. In terms of processing, phosphorylated by PKA; this causes down-regulation of channel activity.

It is found in the postsynaptic cell membrane. The protein localises to the perikaryon. Its subcellular location is the cell projection. The protein resides in the dendrite. It localises to the synapse. It is found in the cell membrane. It carries out the reaction chloride(in) = chloride(out). Its activity is regulated as follows. Low levels of Zn(2+) ions (1 uM) increase glycine sensitivity and decrease the glycine concentration required for half-maximal channel activity. Channel activity is strongly enhanced by ethanol. Inhibited by picrotoxin. Inhibited by prostaglandin E2, probably via PKA-mediated phosphorylation at Ser-379. Its function is as follows. Glycine receptors are ligand-gated chloride channels. Channel opening is triggered by extracellular glycine. Channel characteristics depend on the subunit composition; heteropentameric channels display faster channel closure. Plays an important role in the down-regulation of neuronal excitability. Contributes to the generation of inhibitory postsynaptic currents. Contributes to increased pain perception in response to increased prostaglandin E2 levels. Plays a role in cellular responses to ethanol. This Rattus norvegicus (Rat) protein is Glycine receptor subunit alpha-3 (Glra3).